Consider the following 445-residue polypeptide: Dolichyl-diphosphooligosaccharide--protein glycosyltransferase 48 kDa subunit (445 aa).

The N-terminal stretch at M1 to A20 is a signal peptide. Topologically, residues D21–P405 are lumenal. A helical transmembrane segment spans residues Y406–Y426. Residues H427–N445 lie on the Cytoplasmic side of the membrane.

This sequence belongs to the DDOST 48 kDa subunit family. In terms of assembly, component of the oligosaccharyltransferase (OST) complex.

The protein resides in the endoplasmic reticulum membrane. It functions in the pathway protein modification; protein glycosylation. Its function is as follows. Subunit of the oligosaccharyl transferase (OST) complex that catalyzes the initial transfer of a defined glycan (Glc(3)Man(9)GlcNAc(2) in eukaryotes) from the lipid carrier dolichol-pyrophosphate to an asparagine residue within an Asn-X-Ser/Thr consensus motif in nascent polypeptide chains, the first step in protein N-glycosylation. N-glycosylation occurs cotranslationally and the complex associates with the Sec61 complex at the channel-forming translocon complex that mediates protein translocation across the endoplasmic reticulum (ER). All subunits are required for a maximal enzyme activity. Required for the assembly of both SST3A- and SS3B-containing OST complexes. Required for normal lifespan. The polypeptide is Dolichyl-diphosphooligosaccharide--protein glycosyltransferase 48 kDa subunit (Caenorhabditis elegans).